A 635-amino-acid chain; its full sequence is tRNA uridine 5-carboxymethylaminomethyl modification enzyme MnmG (635 aa).

An FAD-binding site is contributed by Gly-19 to Gly-24. Gly-280–Phe-294 is a binding site for NAD(+).

The protein belongs to the MnmG family. Homodimer. Heterotetramer of two MnmE and two MnmG subunits. Requires FAD as cofactor.

It is found in the cytoplasm. Its function is as follows. NAD-binding protein involved in the addition of a carboxymethylaminomethyl (cmnm) group at the wobble position (U34) of certain tRNAs, forming tRNA-cmnm(5)s(2)U34. The chain is tRNA uridine 5-carboxymethylaminomethyl modification enzyme MnmG from Synechocystis sp. (strain ATCC 27184 / PCC 6803 / Kazusa).